We begin with the raw amino-acid sequence, 174 residues long: Crossover junction endodeoxyribonuclease RuvC (174 aa).

Catalysis depends on residues Asp8, Glu67, and Asp139. Residues Asp8, Glu67, and Asp139 each coordinate Mg(2+).

This sequence belongs to the RuvC family. In terms of assembly, homodimer which binds Holliday junction (HJ) DNA. The HJ becomes 2-fold symmetrical on binding to RuvC with unstacked arms; it has a different conformation from HJ DNA in complex with RuvA. In the full resolvosome a probable DNA-RuvA(4)-RuvB(12)-RuvC(2) complex forms which resolves the HJ. Mg(2+) serves as cofactor.

It is found in the cytoplasm. It catalyses the reaction Endonucleolytic cleavage at a junction such as a reciprocal single-stranded crossover between two homologous DNA duplexes (Holliday junction).. The RuvA-RuvB-RuvC complex processes Holliday junction (HJ) DNA during genetic recombination and DNA repair. Endonuclease that resolves HJ intermediates. Cleaves cruciform DNA by making single-stranded nicks across the HJ at symmetrical positions within the homologous arms, yielding a 5'-phosphate and a 3'-hydroxyl group; requires a central core of homology in the junction. The consensus cleavage sequence is 5'-(A/T)TT(C/G)-3'. Cleavage occurs on the 3'-side of the TT dinucleotide at the point of strand exchange. HJ branch migration catalyzed by RuvA-RuvB allows RuvC to scan DNA until it finds its consensus sequence, where it cleaves and resolves the cruciform DNA. This Pseudomonas savastanoi pv. phaseolicola (strain 1448A / Race 6) (Pseudomonas syringae pv. phaseolicola (strain 1448A / Race 6)) protein is Crossover junction endodeoxyribonuclease RuvC.